Consider the following 630-residue polypeptide: Mesothelin (630 aa).

A signal peptide spans 1 to 36 (MALPTARPLLGSCGTPALGSLLFLLFSLGWVQPSRT). N-linked (GlcNAc...) asparagine glycosylation occurs at Asn-57. At Ser-200 the chain carries Phosphoserine; by FAM20C. Positions 262-286 (SIPQGIVAAWRQRSSRDPSWRQPER) are required for megakaryocyte-potentiating factor activity. A disulfide bond links Cys-302 and Cys-326. Residues Asn-388, Asn-496, and Asn-523 are each glycosylated (N-linked (GlcNAc...) asparagine). Ser-606 carries GPI-anchor amidated serine lipidation. Positions 607 to 630 (GTPCLLGPGPVLTVLALLLASTLA) are cleaved as a propeptide — removed in mature form.

Belongs to the mesothelin family. Interacts with MUC16. In terms of processing, both MPF and the cleaved form of mesothelin are N-glycosylated. Proteolytically cleaved by a furin-like convertase to generate megakaryocyte-potentiating factor (MPF), and the cleaved form of mesothelin. As to expression, expressed in lung. Expressed at low levels in heart, placenta and kidney. Expressed in mesothelial cells. Highly expressed in mesotheliomas, ovarian cancers, and some squamous cell carcinomas (at protein level).

The protein localises to the cell membrane. The protein resides in the golgi apparatus. It localises to the secreted. Its function is as follows. Membrane-anchored forms may play a role in cellular adhesion. Functionally, megakaryocyte-potentiating factor (MPF) potentiates megakaryocyte colony formation in vitro. The protein is Mesothelin (MSLN) of Homo sapiens (Human).